A 484-amino-acid chain; its full sequence is Regulatory protein ViaA (484 aa).

Belongs to the ViaA family. In terms of assembly, homodimer. Interacts with RavA.

It localises to the cytoplasm. Component of the RavA-ViaA chaperone complex, which may act on the membrane to optimize the function of some of the respiratory chains. ViaA stimulates the ATPase activity of RavA. The protein is Regulatory protein ViaA of Edwardsiella ictaluri (strain 93-146).